Reading from the N-terminus, the 428-residue chain is Probable pectin lyase F (428 aa).

The first 20 residues, 1–20 (MVLLHPLLTAAALLGASARA), serve as a signal peptide directing secretion. C83 and C107 form a disulfide bridge. R257 is an active-site residue. An N-linked (GlcNAc...) asparagine glycan is attached at N276. An intrachain disulfide couples C324 to C332. The interval 383–428 (GSGGSGAASSSVSITPSPTSSAIPSSSATPSSSAYARRHYARHHHY) is disordered. Positions 389-417 (AASSSVSITPSPTSSAIPSSSATPSSSAY) are enriched in low complexity. Residues 418–428 (ARRHYARHHHY) show a composition bias toward basic residues.

It belongs to the polysaccharide lyase 1 family.

The protein resides in the secreted. It carries out the reaction Eliminative cleavage of (1-&gt;4)-alpha-D-galacturonan methyl ester to give oligosaccharides with 4-deoxy-6-O-methyl-alpha-D-galact-4-enuronosyl groups at their non-reducing ends.. Functionally, pectinolytic enzymes consist of four classes of enzymes: pectin lyase, polygalacturonase, pectin methylesterase and rhamnogalacturonase. Among pectinolytic enzymes, pectin lyase is the most important in depolymerization of pectin, since it cleaves internal glycosidic bonds of highly methylated pectins. This chain is Probable pectin lyase F (pelF), found in Aspergillus oryzae (strain ATCC 42149 / RIB 40) (Yellow koji mold).